A 460-amino-acid chain; its full sequence is MKNYALVLAAGKGTRMKSDIPKVAFPILRKPMIEYIVENIEKSSVEEIYLVLGYKREVVEGIVKDRAKYVYQEEQLGTGHAAMMAAPVLSKLDGNTFIMPGDVPLIWYKSIDRMFAVHEDNGNDFTIVTAHYEDPEGYGRIVRNEQGVIQRIVEEKDANDFEKEIKEVNTGIYIVNNKKFFSLLKNLNNNNAKGEYYITDMVELMKKDYKIGSYMIKNNSLAMGVNDLYAISKAEKYLREYINKDHMLNGVSMINPETITIGHNVIIEPGVTINPNTTITGDTVIKAGAIVGPNTEIHNSRIDSHVVVRHSLVYDSIVREGTTVGPFAHLRDHADIGTHNRIGNFVEVKKSSTGHNTKASHLAYIGDSVVGESVNFGCGSVTVNYDGKLKHKTEIGDNVFIGCNTNLIAPIKIGDNVFIAAGSTVTKDIPDNGFAIARSRQVTKEDYSKYLISPKPKKEE.

Residues 1–228 (MKNYALVLAA…NSLAMGVNDL (228 aa)) form a pyrophosphorylase region. UDP-N-acetyl-alpha-D-glucosamine is bound by residues 8-11 (LAAG), Lys22, Gln72, and 77-78 (GT). Position 102 (Asp102) interacts with Mg(2+). UDP-N-acetyl-alpha-D-glucosamine-binding residues include Gly139, Glu154, Asn169, and Asn226. A Mg(2+)-binding site is contributed by Asn226. Residues 229-249 (YAISKAEKYLREYINKDHMLN) form a linker region. The tract at residues 250 to 460 (GVSMINPETI…LISPKPKKEE (211 aa)) is N-acetyltransferase. Positions 331 and 349 each coordinate UDP-N-acetyl-alpha-D-glucosamine. The Proton acceptor role is filled by His361. UDP-N-acetyl-alpha-D-glucosamine-binding residues include Tyr364 and Asn375. Residues 384 to 385 (NY), Ala421, and Arg438 each bind acetyl-CoA.

This sequence in the N-terminal section; belongs to the N-acetylglucosamine-1-phosphate uridyltransferase family. In the C-terminal section; belongs to the transferase hexapeptide repeat family. Homotrimer. Mg(2+) is required as a cofactor.

It localises to the cytoplasm. It carries out the reaction alpha-D-glucosamine 1-phosphate + acetyl-CoA = N-acetyl-alpha-D-glucosamine 1-phosphate + CoA + H(+). The enzyme catalyses N-acetyl-alpha-D-glucosamine 1-phosphate + UTP + H(+) = UDP-N-acetyl-alpha-D-glucosamine + diphosphate. The protein operates within nucleotide-sugar biosynthesis; UDP-N-acetyl-alpha-D-glucosamine biosynthesis; N-acetyl-alpha-D-glucosamine 1-phosphate from alpha-D-glucosamine 6-phosphate (route II): step 2/2. Its pathway is nucleotide-sugar biosynthesis; UDP-N-acetyl-alpha-D-glucosamine biosynthesis; UDP-N-acetyl-alpha-D-glucosamine from N-acetyl-alpha-D-glucosamine 1-phosphate: step 1/1. It participates in bacterial outer membrane biogenesis; LPS lipid A biosynthesis. Catalyzes the last two sequential reactions in the de novo biosynthetic pathway for UDP-N-acetylglucosamine (UDP-GlcNAc). The C-terminal domain catalyzes the transfer of acetyl group from acetyl coenzyme A to glucosamine-1-phosphate (GlcN-1-P) to produce N-acetylglucosamine-1-phosphate (GlcNAc-1-P), which is converted into UDP-GlcNAc by the transfer of uridine 5-monophosphate (from uridine 5-triphosphate), a reaction catalyzed by the N-terminal domain. The polypeptide is Bifunctional protein GlmU (Acholeplasma laidlawii (strain PG-8A)).